Consider the following 485-residue polypeptide: NADH-quinone oxidoreductase subunit N (485 aa).

14 helical membrane passes run 8 to 28 (LIAL…MLSI), 35 to 55 (FLNA…LWFV), 71 to 91 (GFAM…CTFA), 105 to 125 (FYLL…ANHL), 127 to 147 (SLFL…GYAF), 159 to 179 (YTIL…LVYA), 203 to 223 (LLAG…LVPF), 235 to 255 (PAPV…GVVM), 271 to 291 (VVLA…ALSQ), 297 to 317 (LLGY…IALQ), 326 to 346 (VGVY…VVSL), 373 to 393 (AAVM…LGFI), 408 to 430 (WWLV…RVAV), and 450 to 470 (YSAG…LGVW).

The protein belongs to the complex I subunit 2 family. In terms of assembly, NDH-1 is composed of 13 different subunits. Subunits NuoA, H, J, K, L, M, N constitute the membrane sector of the complex.

Its subcellular location is the cell inner membrane. The catalysed reaction is a quinone + NADH + 5 H(+)(in) = a quinol + NAD(+) + 4 H(+)(out). In terms of biological role, NDH-1 shuttles electrons from NADH, via FMN and iron-sulfur (Fe-S) centers, to quinones in the respiratory chain. The immediate electron acceptor for the enzyme in this species is believed to be ubiquinone. Couples the redox reaction to proton translocation (for every two electrons transferred, four hydrogen ions are translocated across the cytoplasmic membrane), and thus conserves the redox energy in a proton gradient. This Shigella boydii serotype 4 (strain Sb227) protein is NADH-quinone oxidoreductase subunit N.